A 243-amino-acid polypeptide reads, in one-letter code: Small ribosomal subunit protein uS3 (243 aa).

The KH type-2 domain maps to 39–110 (IRVFIQKKYG…QVRINVVEIE (72 aa)). The tract at residues 216 to 243 (QPLPVGASPRRKGNRRPQQFEDRSNDGK) is disordered. Residues 233–243 (QQFEDRSNDGK) show a composition bias toward basic and acidic residues.

This sequence belongs to the universal ribosomal protein uS3 family. As to quaternary structure, part of the 30S ribosomal subunit. Forms a tight complex with proteins S10 and S14.

In terms of biological role, binds the lower part of the 30S subunit head. Binds mRNA in the 70S ribosome, positioning it for translation. This is Small ribosomal subunit protein uS3 from Prochlorococcus marinus (strain SARG / CCMP1375 / SS120).